We begin with the raw amino-acid sequence, 541 residues long: Pseudokinase FAM20A (541 aa).

The N-terminal stretch at 1 to 33 (MPGLRRDRLLTLLLLGALLSADLYFHLWPQVQR) is a signal peptide. Residues 38 to 90 (RERPRGCPCTGRASSLARDSAAAASDPGTIVHNFSRTEPRTEPAGGSHSGSSS) form a disordered region. The span at 49 to 63 (RASSLARDSAAAASD) shows a compositional bias: low complexity. Asn70, Asn145, and Asn287 each carry an N-linked (GlcNAc...) asparagine glycan. Cystine bridges form between Cys314/Cys330, Cys319/Cys323, Cys378/Cys452, and Cys453/Cys512. N-linked (GlcNAc...) asparagine glycosylation is present at Asn388. Asn538 carries an N-linked (GlcNAc...) asparagine glycan.

This sequence belongs to the FAM20 family. Interacts with FAM20C; probably forming a heterotetramer of 2 subunits of FAM20A and 2 subunits of FAM20C. N-glycosylated. Highly expressed in lung and liver. Intermediate levels in thymus and ovary.

Its subcellular location is the secreted. The protein localises to the golgi apparatus. The protein resides in the endoplasmic reticulum. Its function is as follows. Pseudokinase that acts as an allosteric activator of the Golgi serine/threonine protein kinase FAM20C and is involved in biomineralization of teeth. Forms a complex with FAM20C and increases the ability of FAM20C to phosphorylate the proteins that form the 'matrix' that guides the deposition of the enamel minerals. The polypeptide is Pseudokinase FAM20A (Homo sapiens (Human)).